Consider the following 2346-residue polypeptide: Acetyl-CoA carboxylase 1 (2346 aa).

An N-acetylmethionine modification is found at Met-1. Phosphoserine occurs at positions 5, 23, 25, 29, 34, 48, 50, and 53. Thr-58 carries the post-translational modification Phosphothreonine. Ser-78 carries the post-translational modification Phosphoserine. Ser-80 carries the post-translational modification Phosphoserine; by AMPK. The Biotin carboxylation domain occupies 117–618; that stretch reads VIEKVLIANN…GTGWLDRLIA (502 aa). The region spanning 275 to 466 is the ATP-grasp domain; it reads SKRILNVPQE…LPAAQLQIAM (192 aa). 315-320 contributes to the ATP binding site; it reads GGGGKG. Residues Glu-424, Glu-437, and Asn-439 each contribute to the Mg(2+) site. The Mn(2+) site is built by Glu-424, Glu-437, and Asn-439. Arg-441 is a catalytic residue. Residue Thr-610 is modified to Phosphothreonine. A Biotinyl-binding domain is found at 745–819; that stretch reads FEKENDPSVL…DPGCVIAKMQ (75 aa). Lys-786 carries the N6-biotinyllysine modification. Phosphoserine is present on residues Ser-835, Ser-1201, Ser-1216, and Ser-1218. Phosphothreonine is present on Thr-1227. A phosphoserine mark is found at Ser-1259, Ser-1263, and Ser-1273. Lys-1334 is subject to N6-acetyllysine. Positions 1576–1914 constitute a CoA carboxyltransferase N-terminal domain; the sequence is PYVTKDQLQS…SVYSSVPLLN (339 aa). Residues 1576 to 2234 are carboxyltransferase; it reads PYVTKDQLQS…EDLVKKKIHN (659 aa). Residues Arg-1823, Lys-2127, and Arg-2129 each coordinate CoA. Residues 1918–2234 enclose the CoA carboxyltransferase C-terminal domain; that stretch reads PIDRVIEFVP…EDLVKKKIHN (317 aa). Thr-2153 is modified (phosphothreonine).

As to quaternary structure, monomer, homodimer, and homotetramer. Can form filamentous polymers. Interacts in its inactive phosphorylated form with the BRCT domains of BRCA1 which prevents ACACA dephosphorylation and inhibits lipid synthesis. Interacts with MID1IP1; interaction with MID1IP1 promotes oligomerization and increases its activity. The cofactor is Mg(2+). Requires Mn(2+) as cofactor. It depends on biotin as a cofactor. Post-translationally, phosphorylation on Ser-1263 is required for interaction with BRCA1. In terms of processing, phosphorylation at Ser-80 by AMPK inactivates enzyme activity. The biotin cofactor is covalently attached to the central biotinyl-binding domain and is required for the catalytic activity.

It is found in the cytoplasm. It localises to the cytosol. The enzyme catalyses hydrogencarbonate + acetyl-CoA + ATP = malonyl-CoA + ADP + phosphate + H(+). It functions in the pathway lipid metabolism; malonyl-CoA biosynthesis; malonyl-CoA from acetyl-CoA: step 1/1. Inhibited by phosphorylation. Citrate promotes oligomerization of the protein into filaments that correspond to the most active form of the carboxylase. Its function is as follows. Cytosolic enzyme that catalyzes the carboxylation of acetyl-CoA to malonyl-CoA, the first and rate-limiting step of de novo fatty acid biosynthesis. This is a 2 steps reaction starting with the ATP-dependent carboxylation of the biotin carried by the biotin carboxyl carrier (BCC) domain followed by the transfer of the carboxyl group from carboxylated biotin to acetyl-CoA. This is Acetyl-CoA carboxylase 1 from Bos taurus (Bovine).